The chain runs to 1696 residues: E3 ubiquitin-protein ligase listerin (1696 aa).

17 HEAT repeats span residues 17 to 55, 102 to 140, 144 to 181, 209 to 250, 252 to 289, 354 to 394, 431 to 468, 542 to 580, 596 to 634, 921 to 958, 992 to 1029, 1108 to 1148, 1150 to 1188, 1245 to 1282, 1307 to 1344, 1371 to 1405, and 1406 to 1442; these read RGVL…KVKK, FCKE…KYFR, CSLL…WKYS, AEAS…CWEH, NAQK…RVPT, LISD…KAES, EKNL…GEGD, FPSI…PAVQ, EESD…KWSV, LCTA…AEML, MDLS…KRGA, DLCQ…LIGL, VEMI…WLES, GIYS…TLGY, DSLQ…DLPG, VLAI…CFVL, and GYLL…LNKL. The segment at 1645 to 1692 adopts an RING-type zinc-finger fold; sequence CMICFSVIHGSNYSLPKKACRTCKKKFHSECLYKWFTSSNKSTCPLCR.

Belongs to the LTN1 family. In terms of assembly, component of the ribosome quality control complex (RQC), composed of at least the E3 ubiquitin ligase LTN1 and NEMF associated with the 60S ribosomal subunit. The complex probably also contains TCF25 as well as VCP/p97 and its ubiquitin-binding cofactors.

Its subcellular location is the cytoplasm. It is found in the cytosol. The enzyme catalyses S-ubiquitinyl-[E2 ubiquitin-conjugating enzyme]-L-cysteine + [acceptor protein]-L-lysine = [E2 ubiquitin-conjugating enzyme]-L-cysteine + N(6)-ubiquitinyl-[acceptor protein]-L-lysine.. It participates in protein modification; protein ubiquitination. In terms of biological role, E3 ubiquitin-protein ligase component of the ribosome quality control complex (RQC), a ribosome-associated complex that mediates ubiquitination and extraction of incompletely synthesized nascent chains for proteasomal degradation. Within the RQC complex, LTN1 is recruited to stalled 60S ribosomal subunits by NEMF and mediates ubiquitination of stalled nascent chains. Ubiquitination leads to VCP/p97 recruitment for extraction and degradation of the incomplete translation product. This Xenopus tropicalis (Western clawed frog) protein is E3 ubiquitin-protein ligase listerin (ltn1).